The chain runs to 129 residues: Small ribosomal subunit protein uS11 (129 aa).

Belongs to the universal ribosomal protein uS11 family. In terms of assembly, part of the 30S ribosomal subunit. Interacts with proteins S7 and S18. Binds to IF-3.

Its function is as follows. Located on the platform of the 30S subunit, it bridges several disparate RNA helices of the 16S rRNA. Forms part of the Shine-Dalgarno cleft in the 70S ribosome. The protein is Small ribosomal subunit protein uS11 of Symbiobacterium thermophilum (strain DSM 24528 / JCM 14929 / IAM 14863 / T).